The primary structure comprises 230 residues: Probable phosphatase IndB (230 aa).

Asp8 functions as the Nucleophile in the catalytic mechanism. Residues Asp8, Asp10, and Asp169 each contribute to the Mg(2+) site. Asp10 acts as the Proton donor in catalysis.

The protein belongs to the HAD-like hydrolase superfamily. It depends on Mg(2+) as a cofactor.

In terms of biological role, part of an operon that could be involved in the biosynthesis of the blue pigment indigoidine, which is implicated in pathogenicity and protection from oxidative stress. The chain is Probable phosphatase IndB from Dickeya dadantii (strain 3937) (Erwinia chrysanthemi (strain 3937)).